Consider the following 213-residue polypeptide: Orotate phosphoribosyltransferase (213 aa).

A 5-phospho-alpha-D-ribose 1-diphosphate-binding site is contributed by Lys-26. 34 to 35 is a binding site for orotate; the sequence is FF. 5-phospho-alpha-D-ribose 1-diphosphate-binding positions include 72-73, Arg-99, Lys-100, Lys-103, His-105, and 124-132; these read YK and DDVITAGTA. Orotate contacts are provided by Thr-128 and Arg-156.

Belongs to the purine/pyrimidine phosphoribosyltransferase family. PyrE subfamily. Homodimer. Mg(2+) serves as cofactor.

It catalyses the reaction orotidine 5'-phosphate + diphosphate = orotate + 5-phospho-alpha-D-ribose 1-diphosphate. It participates in pyrimidine metabolism; UMP biosynthesis via de novo pathway; UMP from orotate: step 1/2. Its function is as follows. Catalyzes the transfer of a ribosyl phosphate group from 5-phosphoribose 1-diphosphate to orotate, leading to the formation of orotidine monophosphate (OMP). This is Orotate phosphoribosyltransferase from Saccharophagus degradans (strain 2-40 / ATCC 43961 / DSM 17024).